Reading from the N-terminus, the 86-residue chain is MKASMFLALAGLALLFVVCYASESEEKEFSNELLSSVLAVDDNSKGEERECLGFGKGCNPSSDQCCKSSNLVCSRKHRWCKYEIGK.

Residues 1–21 form the signal peptide; sequence MKASMFLALAGLALLFVVCYA. Positions 22-49 are excised as a propeptide; the sequence is SESEEKEFSNELLSSVLAVDDNSKGEER. 3 disulfides stabilise this stretch: Cys-51/Cys-66, Cys-58/Cys-73, and Cys-65/Cys-80. Ile-84 carries the isoleucine amide modification.

It belongs to the neurotoxin 10 (Hwtx-1) family. 22 (Htx-4) subfamily. In terms of assembly, monomer. As to expression, expressed by the venom gland.

Its subcellular location is the secreted. Functionally, neurotoxin. Selectively blocks neuronal tetrodotoxin-sensitive voltage-gated sodium channels (Nav). Does not affect tetrodotoxin-resistant voltage-gated sodium channels or calcium channels. The polypeptide is Mu-theraphotoxin-Hhn1d (Cyriopagopus hainanus (Chinese bird spider)).